A 317-amino-acid polypeptide reads, in one-letter code: Chitin synthase export chaperone (317 aa).

7 helical membrane-spanning segments follow: residues 63 to 83 (IFEI…IIII), 101 to 121 (FFQT…GVSA), 133 to 153 (VQLG…LLGF), 164 to 184 (MLLL…VSIV), 204 to 224 (FTVM…CLLI), 236 to 256 (TGAI…IYAF), and 266 to 286 (HYLD…MMLY).

It belongs to the CHS7 family. As to quaternary structure, interacts with CHS3.

Its subcellular location is the endoplasmic reticulum membrane. Chaperone required for the export of the chitin synthase CHS3 from the endoplasmic reticulum. This Kluyveromyces lactis (strain ATCC 8585 / CBS 2359 / DSM 70799 / NBRC 1267 / NRRL Y-1140 / WM37) (Yeast) protein is Chitin synthase export chaperone (CHS7).